The primary structure comprises 129 residues: Virion-associated protein (129 aa).

Coiled-coil stretches lie at residues methionine 1–methionine 31 and isoleucine 38–aspartate 59. Residues proline 122–phenylalanine 129 form a capsid binding region.

This sequence belongs to the caulimovirus ORF III family. Homotetramer, through coiled-coil domain. Homotrimer when interacts with icosehadral capsid. Interacts with capsid protein, and with Movement protein.

It localises to the virion. The protein resides in the host cell junction. It is found in the host plasmodesma. Functionally, plays a role in virus cell-to-cell and plant-to-plant transmission. Interacts with virion icosahedral capsid and movement protein, thereby facilitating virion cell-to-cell transmission through plasmodesmata opened by viral movement protein. Also interacts with aphid transmission factor, attaching the virion to aphid stylet when the animal feeds on an virus infected plant. Aphid saliva may later detach the virion, inducing release of infectious particles when the animal feeds on a new plant. This Arabidopsis thaliana (Mouse-ear cress) protein is Virion-associated protein.